Here is a 931-residue protein sequence, read N- to C-terminus: Dual O-methyltransferase/FAD-dependent monooxygenase elcB (931 aa).

Residues 1 to 463 (MAASTGLSTV…TTDKARPNGD (463 aa)) are O-methyltransferase. Residue Asp-254 coordinates S-adenosyl-L-methionine. His-304 acts as the Proton acceptor in catalysis. A disordered region spans residues 455–474 (TDKARPNGDTTHSGQASIPN). The span at 462-474 (GDTTHSGQASIPN) shows a compositional bias: polar residues. The interval 464 to 931 (TTHSGQASIP…TFEELDVAEL (468 aa)) is FAD-dependent monooxygenase. 4 residues coordinate FAD: Glu-520, Arg-604, Asp-836, and Ala-849.

In the C-terminal section; belongs to the paxM FAD-dependent monooxygenase family. The protein in the N-terminal section; belongs to the class I-like SAM-binding methyltransferase superfamily. Cation-independent O-methyltransferase family. COMT subfamily.

It catalyses the reaction nor-toralactone + S-adenosyl-L-methionine = toralactone + S-adenosyl-L-homocysteine + H(+). The enzyme catalyses toralactone + NADH + O2 + H(+) = 1-(3,4,5-trihydroxy-7-methoxynaphthalen-2-yl)propan-2-one + CO2 + NAD(+). The protein operates within secondary metabolite biosynthesis. Dual O-methyltransferase/FAD-dependent monooxygenase; part of the gene cluster that mediates the biosynthesis of elsinochrome C, a perelyenequinone phytotoxin structurally similar to cercosporin. The first step of elsinochrome C biosynthesis is performed by the polyketide synthase elcA which catalyzes the formation of nor-toralactone. The starter unit acyltransferase (SAT) domain of elcA initiates polyketide extension by the selective utilization of acetyl-CoA, which is elongated to the heptaketide in the beta-ketoacyl synthase (KS) domain by successive condensations with six malonyl units introduced by the malonyl acyltransferase (MAT) domain. The product template (PT) domain catalyzes C4-C9 and C2-C11 aldol cyclizations and dehydrations to a trihydroxynaphthalene, which is thought to be delivered to the thioesterase (TE) domain for product release. The bifunctional enzyme elcB then methylates nor-toralactone to toralactone before conducting an unusual oxidative aromatic ring opening. The next step in perylenequinone biosynthesis is an O-methylation at the nascent OH-6 of the elcB product performed by the O-methyltransferase elcD. The oxidative coupling of the two monomeric naphthol units in perylenequinone biosynthesis is catalyzed by the FAD-dependent monooxygenase elcE and the multicopper oxidase elcG. ElcG might catalyze the first intermolecular coupling in a regio- and stereo-selective manner via a phenol radical coupling mechanism and the elcE could forge the second C-C bond intramolecularly via a hydride transfer mechanism. The fasciclin domain-containing protein elcF might also play a role duting this step. The last piece of the puzzle in the biosynthesis of elsinochrome C is the additional annulation by enolate coupling to afford the dihydrobenzo(ghi)perylenequinone system, catalyzed by the FAD-dependent monooxygenase elcH. The polypeptide is Dual O-methyltransferase/FAD-dependent monooxygenase elcB (Phaeosphaeria nodorum (strain SN15 / ATCC MYA-4574 / FGSC 10173) (Glume blotch fungus)).